The sequence spans 160 residues: Triabin (160 aa).

The first 18 residues, 1-18 (MKTIIAVTIFGILTCAYA), serve as a signal peptide directing secretion. Disulfide bonds link Cys-24–Cys-128, Cys-57–Cys-160, and Cys-87–Cys-102.

It belongs to the calycin superfamily. Triabin family. In terms of tissue distribution, expressed in salivary glands.

It localises to the secreted. Its function is as follows. Thrombin inhibitor. Forms a non-covalent complex with thrombin at a molar ratio of 1:1. Inhibits thrombin-induced platelet aggregation. Prolongs thrombin clotting time and activated partial thromboplastin time. It only minimally suppresses the amidolytic activity of thrombin. Inhibits thrombin-mediated fibrin formation in the host. Inhibits thrombin-induced endothelium-dependent relaxant and contractile responses in host blood vessels. Inhibits thrombin-induced mitogenesis in host vascular smooth muscle cells. The chain is Triabin from Meccus pallidipennis (Triatomine bug).